The following is a 267-amino-acid chain: MVKVAVCGAAGRMGQRIIVAITEAEGAELSGALERPGHPLVGQDAGILAGCGELKVKISDDINAVVEGCDVLIDFTTPKVSLKNLEACALKKKSIVIGSTGFTPEERVLAAELARDIPAVLAPNMSVGVNVCFKVLKDVAKTLGDDFDVEIVELHHNKKKDAPSGTAVRMGEVVAEALGRDYNKVANYHREGICGERTKEEIGMQTVRGGDIIGEHTVYFIGMGERIEISHRAMTRDMFSRGSVRAAKWVVGKKPGLYDMQDVLGLK.

NAD(+) is bound by residues glycine 8–methionine 13 and glutamate 34. Arginine 35 is an NADP(+) binding site. Residues glycine 98–threonine 100 and alanine 122–methionine 125 each bind NAD(+). The active-site Proton donor/acceptor is histidine 155. Histidine 156 is a (S)-2,3,4,5-tetrahydrodipicolinate binding site. The Proton donor role is filled by lysine 159. Glycine 165 to threonine 166 is a (S)-2,3,4,5-tetrahydrodipicolinate binding site.

Belongs to the DapB family.

It is found in the cytoplasm. The catalysed reaction is (S)-2,3,4,5-tetrahydrodipicolinate + NAD(+) + H2O = (2S,4S)-4-hydroxy-2,3,4,5-tetrahydrodipicolinate + NADH + H(+). It carries out the reaction (S)-2,3,4,5-tetrahydrodipicolinate + NADP(+) + H2O = (2S,4S)-4-hydroxy-2,3,4,5-tetrahydrodipicolinate + NADPH + H(+). It participates in amino-acid biosynthesis; L-lysine biosynthesis via DAP pathway; (S)-tetrahydrodipicolinate from L-aspartate: step 4/4. In terms of biological role, catalyzes the conversion of 4-hydroxy-tetrahydrodipicolinate (HTPA) to tetrahydrodipicolinate. The sequence is that of 4-hydroxy-tetrahydrodipicolinate reductase from Geotalea daltonii (strain DSM 22248 / JCM 15807 / FRC-32) (Geobacter daltonii).